Consider the following 380-residue polypeptide: MYIEMAQQQQQSGSDNSMAPVWIVILLFITAYFVWALAHQYIVSFVFTINIWQARLVNLFLNNQLLANQIYLMQTLDPNTVNWDQMVTVMRAVGDYMRYPVICILVVLAFVLYNSNVTLKYRKTYDMKSLRAQEQFNWPAIMPIVKEDLVSQDVNKGPWAMALTPMEFARKYNLLRKDDALLDNPVPGEEMTAGIRRGDAKRVFTMQLGPYWDGFERCSPQAYALSAVFMARMNRDRDAANNILKVLDKTFVDGKPDFSVARPVMKKYQNSELVQEVVAKHAYVLTVIASLLEAAREDGVVPSSEFLWLKPVDRRLWYMLNCVGRQTPYSEVAGPFAHWKAEKEMGRRSLVPMIDEAIRALEIAVKEVRLTPRQMEELEP.

A run of 2 helical transmembrane segments spans residues 18–38 (MAPVWIVILLFITAYFVWALA) and 99–119 (YPVICILVVLAFVLYNSNVTL).

The T4BSS is a complex nanomachine composed of several subcomplexes. This subunit is part of the Type IV Coupling Complex (T4CC), a subcomplex composed of the DotLMNYZ core and the IcmSW-LvgA adapter subunits, linked by the C-terminal tail of DotL. Six DotLMNYZ hetero-pentameric units may assemble into a hexameric nanomachine, forming an inner membrane channel for effectors to pass through. Interacts directly with DotL.

The protein resides in the cell inner membrane. Functionally, component of the Dot/Icm type IVB secretion system (T4BSS), which is used to inject bacterial effector proteins into eukaryotic host cells. Part of a subcomplex which recruits effector proteins and delivers them to the core transmembrane subcomplex. Forms the interacting surface for recruitment of acidic Glu-rich motif-containing effectors. The sequence is that of Type 4 apparatus protein DotM from Legionella pneumophila subsp. pneumophila (strain Philadelphia 1 / ATCC 33152 / DSM 7513).